The following is a 717-amino-acid chain: Photosystem I P700 chlorophyll a apoprotein A1 (717 aa).

Helical transmembrane passes span valine 58–alanine 81, leucine 144–histidine 167, leucine 183–leucine 207, isoleucine 279–tyrosine 297, tryptophan 334–tyrosine 357, leucine 373–valine 399, alanine 421–histidine 443, and phenylalanine 519–leucine 537. 2 residues coordinate [4Fe-4S] cluster: cysteine 561 and cysteine 570. The next 2 helical transmembrane spans lie at histidine 577–tryptophan 598 and leucine 652–phenylalanine 674. A chlorophyll a'-binding site is contributed by histidine 663. Methionine 671 and tyrosine 679 together coordinate chlorophyll a. A phylloquinone-binding site is contributed by tryptophan 680. The chain crosses the membrane as a helical span at residues alanine 712–histidine 717.

It belongs to the PsaA/PsaB family. In terms of assembly, the PsaA/B heterodimer binds the P700 chlorophyll special pair and subsequent electron acceptors. PSI consists of a core antenna complex that captures photons, and an electron transfer chain that converts photonic excitation into a charge separation. The eukaryotic PSI reaction center is composed of at least 11 subunits. It depends on P700 is a chlorophyll a/chlorophyll a' dimer, A0 is one or more chlorophyll a, A1 is one or both phylloquinones and FX is a shared 4Fe-4S iron-sulfur center. as a cofactor.

It localises to the plastid. The protein localises to the chloroplast thylakoid membrane. The catalysed reaction is reduced [plastocyanin] + hnu + oxidized [2Fe-2S]-[ferredoxin] = oxidized [plastocyanin] + reduced [2Fe-2S]-[ferredoxin]. PsaA and PsaB bind P700, the primary electron donor of photosystem I (PSI), as well as the electron acceptors A0, A1 and FX. PSI is a plastocyanin-ferredoxin oxidoreductase, converting photonic excitation into a charge separation, which transfers an electron from the donor P700 chlorophyll pair to the spectroscopically characterized acceptors A0, A1, FX, FA and FB in turn. Oxidized P700 is reduced on the lumenal side of the thylakoid membrane by plastocyanin. This is Photosystem I P700 chlorophyll a apoprotein A1 from Drimys winteri (Winter's bark).